The following is a 529-amino-acid chain: Delayed-rectifier potassium channel regulatory subunit KCNS1 (529 aa).

The Cytoplasmic portion of the chain corresponds to 1–217; sequence MLMLLVRGTR…LTMENPGYSL (217 aa). A helical membrane pass occupies residues 218–239; the sequence is PSKLFSCVSISVVLASIAAMCI. Over 240–270 the chain is Extracellular; it reads HSLPEYQAREAAAAVAAVAAGRSPEGVRDDP. The helical transmembrane segment at 271 to 293 threads the bilayer; that stretch reads VLRRLEYFCIAWFSFEVSSRLLL. Over 294–304 the chain is Cytoplasmic; it reads APSTRNFFCHP. Residues 305 to 322 form a helical membrane-spanning segment; the sequence is LNLIDIVSVLPFYLTLLA. Residues 323–340 are Extracellular-facing; it reads GVALGDQGGTGGKELGHL. The chain crosses the membrane as a helical; Voltage-sensor span at residues 341 to 361; it reads GKVVQVFRLMRIFRVLKLARH. Topologically, residues 362–376 are cytoplasmic; the sequence is STGLRSLGATLKHSY. Residues 377–398 traverse the membrane as a helical segment; it reads REVGILLLYLAVGVSVFSGVAY. The Extracellular portion of the chain corresponds to 399–411; that stretch reads TAEKEEDVGFNTI. The helical intramembrane region spans 412 to 423; the sequence is PACWWWGTVSMT. The Selectivity filter signature appears at 424 to 429; that stretch reads TVGYGD. An intramembrane segment occupies 424–431; it reads TVGYGDVV. At 432-438 the chain is on the extracellular side; the sequence is PVTVAGK. The helical transmembrane segment at 439–467 threads the bilayer; it reads LAASGCILGGILVVALPITIIFNKFSHFY. Residues 468–529 lie on the Cytoplasmic side of the membrane; it reads RRQKALEAAV…PSEPPHPQMY (62 aa). Positions 500–529 are disordered; sequence LETSREISQEGRSADLETQAPSEPPHPQMY. The segment covering 502-514 has biased composition (basic and acidic residues); the sequence is TSREISQEGRSAD.

It belongs to the potassium channel family. S (TC 1.A.1.2) subfamily. Kv9.1/KCNS1 sub-subfamily. As to quaternary structure, heterotetramer with KCNB1. Heterotetramer with KCNB2. Does not form homomultimers.

The protein resides in the cell membrane. In terms of biological role, potassium channel regulatory subunit that modulate the delayed rectifier voltage-gated potassium channel activity of KCNB1 and KCNB2 by altering their kinetics, expression levels, and shifting the half-inactivation potential to more polarized values. While it does not form functional channels on its own, it can form functional heterotetrameric channels with KCNB1 and KCNB2. Each regulatory subunit has unique regulatory properties that can lead to extensive inhibition, significant changes in kinetics, and/or substantial shifts in the voltage dependencies of the inactivation process. This is Delayed-rectifier potassium channel regulatory subunit KCNS1 from Colobus guereza (Mantled guereza).